The following is an 86-amino-acid chain: Large ribosomal subunit protein uL23 (86 aa).

The protein belongs to the universal ribosomal protein uL23 family. Part of the 50S ribosomal subunit. Contacts protein L29.

Its function is as follows. Binds to 23S rRNA. One of the proteins that surrounds the polypeptide exit tunnel on the outside of the ribosome. This is Large ribosomal subunit protein uL23 from Methanococcus maripaludis (strain DSM 14266 / JCM 13030 / NBRC 101832 / S2 / LL).